Reading from the N-terminus, the 430-residue chain is 5-methylthioadenosine/S-adenosylhomocysteine deaminase (430 aa).

Positions 63 and 65 each coordinate Zn(2+). The substrate site is built by Glu92, Arg144, and His182. Residue His209 participates in Zn(2+) binding. Positions 212 and 297 each coordinate substrate. Asp297 is a Zn(2+) binding site.

Belongs to the metallo-dependent hydrolases superfamily. MTA/SAH deaminase family. Zn(2+) serves as cofactor.

It catalyses the reaction S-adenosyl-L-homocysteine + H2O + H(+) = S-inosyl-L-homocysteine + NH4(+). The enzyme catalyses S-methyl-5'-thioadenosine + H2O + H(+) = S-methyl-5'-thioinosine + NH4(+). Functionally, catalyzes the deamination of 5-methylthioadenosine and S-adenosyl-L-homocysteine into 5-methylthioinosine and S-inosyl-L-homocysteine, respectively. Is also able to deaminate adenosine. The sequence is that of 5-methylthioadenosine/S-adenosylhomocysteine deaminase from Desulforudis audaxviator (strain MP104C).